Here is a 177-residue protein sequence, read N- to C-terminus: Adenine phosphoribosyltransferase (177 aa).

This sequence belongs to the purine/pyrimidine phosphoribosyltransferase family. Homodimer.

Its subcellular location is the cytoplasm. The catalysed reaction is AMP + diphosphate = 5-phospho-alpha-D-ribose 1-diphosphate + adenine. It functions in the pathway purine metabolism; AMP biosynthesis via salvage pathway; AMP from adenine: step 1/1. Its function is as follows. Catalyzes a salvage reaction resulting in the formation of AMP, that is energically less costly than de novo synthesis. The sequence is that of Adenine phosphoribosyltransferase from Leptospira biflexa serovar Patoc (strain Patoc 1 / Ames).